Reading from the N-terminus, the 163-residue chain is Acetolactate synthase small subunit (163 aa).

An ACT domain is found at 4-79 (ILSVLLENES…VFKVVNLSEQ (76 aa)).

Belongs to the acetolactate synthase small subunit family. In terms of assembly, dimer of large and small chains.

It carries out the reaction 2 pyruvate + H(+) = (2S)-2-acetolactate + CO2. The protein operates within amino-acid biosynthesis; L-isoleucine biosynthesis; L-isoleucine from 2-oxobutanoate: step 1/4. It participates in amino-acid biosynthesis; L-valine biosynthesis; L-valine from pyruvate: step 1/4. In Haemophilus influenzae (strain ATCC 51907 / DSM 11121 / KW20 / Rd), this protein is Acetolactate synthase small subunit (ilvH).